Consider the following 574-residue polypeptide: Putative diflavin flavoprotein A 3 (574 aa).

The zinc metallo-hydrolase stretch occupies residues 43–236; that stretch reads QNGTTYNSFL…PSVKMIATGH (194 aa). Fe cation is bound by residues His-92, Glu-94, Asp-96, His-159, Asp-178, and His-236. In terms of domain architecture, Flavodoxin-like spans 265-409; that stretch reads IGVFYVSEYG…DLGQWVTRDR (145 aa). The flavodoxin-reductase-like stretch occupies residues 410–574; sequence SIKAMKSLGA…VHHRKVGNHY (165 aa).

This sequence in the N-terminal section; belongs to the zinc metallo-hydrolase group 3 family. The protein in the C-terminal section; belongs to the flavodoxin reductase family. The cofactor is Fe cation.

In terms of biological role, mediates electron transfer from NADH to oxygen, reducing it to water. This modular protein has 3 redox cofactors, in other organisms the same activity requires 2 or 3 proteins. The protein is Putative diflavin flavoprotein A 3 (dfa3) of Nostoc sp. (strain PCC 7120 / SAG 25.82 / UTEX 2576).